The following is a 417-amino-acid chain: NADH-quinone oxidoreductase subunit D (417 aa).

Belongs to the complex I 49 kDa subunit family. As to quaternary structure, NDH-1 is composed of 14 different subunits. Subunits NuoB, C, D, E, F, and G constitute the peripheral sector of the complex.

It localises to the cell inner membrane. It catalyses the reaction a quinone + NADH + 5 H(+)(in) = a quinol + NAD(+) + 4 H(+)(out). Its function is as follows. NDH-1 shuttles electrons from NADH, via FMN and iron-sulfur (Fe-S) centers, to quinones in the respiratory chain. The immediate electron acceptor for the enzyme in this species is believed to be ubiquinone. Couples the redox reaction to proton translocation (for every two electrons transferred, four hydrogen ions are translocated across the cytoplasmic membrane), and thus conserves the redox energy in a proton gradient. The chain is NADH-quinone oxidoreductase subunit D from Verminephrobacter eiseniae (strain EF01-2).